A 553-amino-acid chain; its full sequence is Keratin, type II cytoskeletal 6A (553 aa).

Residues 1-20 (MSTKTTIKSQTSHRGYSASS) are compositionally biased toward polar residues. The segment at 1–21 (MSTKTTIKSQTSHRGYSASSA) is disordered. A head region spans residues 1-151 (MSTKTTIKSQ…DPTIQRVRTE (151 aa)). The coil 1A stretch occupies residues 152–187 (EREQIKTLNNKFASFIDKVRFLEQQNKVLDTKWALL). The IF rod domain maps to 152 to 465 (EREQIKTLNN…KLLEGEECRL (314 aa)). The tract at residues 188–206 (QEQGTKTVRQNLEPMFEQY) is linker 1. The tract at residues 207–298 (ISNLRRQLDS…ALYEAELSQM (92 aa)) is coil 1B. The tract at residues 299–322 (QTHISDTSVVLSMDNNRSLDLDSI) is linker 12. A coil 2 region spans residues 323–461 (IAEVKAQYED…ATYRKLLEGE (139 aa)). Residues 462–553 (ECRLNGEGVG…TSSSKKSYRQ (92 aa)) form a tail region. Residues 528-553 (LSSSGGLSSSTIKYTTTSSSKKSYRQ) form a disordered region. Positions 531 to 553 (SGGLSSSTIKYTTTSSSKKSYRQ) are enriched in low complexity.

It belongs to the intermediate filament family. In terms of assembly, heterodimer of a type I and a type II keratin. KRT6 isomers associate with KRT16 and/or KRT17. Interacts with TCHP. As to expression, predominates in the adult trunk skin, tongue, trachea/esophagus and eye. In adult skin, localization is restricted to hair follicles, where it is localized predominantly in the outer root sheath.

Its function is as follows. Epidermis-specific type I keratin involved in wound healing. Involved in the activation of follicular keratinocytes after wounding, while it does not play a major role in keratinocyte proliferation or migration. Participates in the regulation of epithelial migration by inhibiting the activity of SRC during wound repair. The chain is Keratin, type II cytoskeletal 6A (Krt6a) from Mus musculus (Mouse).